The primary structure comprises 328 residues: Tetraacyldisaccharide 4'-kinase (328 aa).

An ATP-binding site is contributed by 55–62; the sequence is TAGGNGKT.

This sequence belongs to the LpxK family.

It carries out the reaction lipid A disaccharide (E. coli) + ATP = lipid IVA (E. coli) + ADP + H(+). It participates in glycolipid biosynthesis; lipid IV(A) biosynthesis; lipid IV(A) from (3R)-3-hydroxytetradecanoyl-[acyl-carrier-protein] and UDP-N-acetyl-alpha-D-glucosamine: step 6/6. Functionally, transfers the gamma-phosphate of ATP to the 4'-position of a tetraacyldisaccharide 1-phosphate intermediate (termed DS-1-P) to form tetraacyldisaccharide 1,4'-bis-phosphate (lipid IVA). In Escherichia coli (strain K12), this protein is Tetraacyldisaccharide 4'-kinase (lpxK).